The following is a 204-amino-acid chain: Holliday junction branch migration complex subunit RuvA (204 aa).

The interval 1–64 (MIGRLRGIIL…EDAQLLFGFN (64 aa)) is domain I. Residues 65 to 143 (SKPERALFRE…GMHGDLFASD (79 aa)) form a domain II region. The tract at residues 144-155 (APFALTSEMPKE) is flexible linker. Residues 156–204 (TANDAEGEAVAALTALGYKPQEASRMIVKVGKPDADCETLIREALRAAI) are domain III.

It belongs to the RuvA family. As to quaternary structure, homotetramer. Forms an RuvA(8)-RuvB(12)-Holliday junction (HJ) complex. HJ DNA is sandwiched between 2 RuvA tetramers; dsDNA enters through RuvA and exits via RuvB. An RuvB hexamer assembles on each DNA strand where it exits the tetramer. Each RuvB hexamer is contacted by two RuvA subunits (via domain III) on 2 adjacent RuvB subunits; this complex drives branch migration. In the full resolvosome a probable DNA-RuvA(4)-RuvB(12)-RuvC(2) complex forms which resolves the HJ.

It is found in the cytoplasm. Functionally, the RuvA-RuvB-RuvC complex processes Holliday junction (HJ) DNA during genetic recombination and DNA repair, while the RuvA-RuvB complex plays an important role in the rescue of blocked DNA replication forks via replication fork reversal (RFR). RuvA specifically binds to HJ cruciform DNA, conferring on it an open structure. The RuvB hexamer acts as an ATP-dependent pump, pulling dsDNA into and through the RuvAB complex. HJ branch migration allows RuvC to scan DNA until it finds its consensus sequence, where it cleaves and resolves the cruciform DNA. The chain is Holliday junction branch migration complex subunit RuvA from Erwinia tasmaniensis (strain DSM 17950 / CFBP 7177 / CIP 109463 / NCPPB 4357 / Et1/99).